A 287-amino-acid polypeptide reads, in one-letter code: Large ribosomal subunit protein uL2 (287 aa).

The segment at 216–287 (RRPEVRGSVM…SKRGRGGRDA (72 aa)) is disordered. Positions 271–287 (QRRRRKSSKRGRGGRDA) are enriched in basic residues.

Belongs to the universal ribosomal protein uL2 family. As to quaternary structure, part of the 50S ribosomal subunit. Forms a bridge to the 30S subunit in the 70S ribosome.

Functionally, one of the primary rRNA binding proteins. Required for association of the 30S and 50S subunits to form the 70S ribosome, for tRNA binding and peptide bond formation. It has been suggested to have peptidyltransferase activity; this is somewhat controversial. Makes several contacts with the 16S rRNA in the 70S ribosome. The sequence is that of Large ribosomal subunit protein uL2 from Synechococcus sp. (strain ATCC 27144 / PCC 6301 / SAUG 1402/1) (Anacystis nidulans).